We begin with the raw amino-acid sequence, 379 residues long: Oxysterol-binding protein-related protein 4C (379 aa).

The protein belongs to the OSBP family. Expressed in flowers.

In terms of biological role, may be involved in the transport of sterols. This chain is Oxysterol-binding protein-related protein 4C (ORP4C), found in Arabidopsis thaliana (Mouse-ear cress).